The following is a 176-amino-acid chain: Ribosome maturation factor RimM (176 aa).

The PRC barrel domain occupies Lys93–Ile172.

Belongs to the RimM family. Binds ribosomal protein uS19.

It is found in the cytoplasm. In terms of biological role, an accessory protein needed during the final step in the assembly of 30S ribosomal subunit, possibly for assembly of the head region. Essential for efficient processing of 16S rRNA. May be needed both before and after RbfA during the maturation of 16S rRNA. It has affinity for free ribosomal 30S subunits but not for 70S ribosomes. The polypeptide is Ribosome maturation factor RimM (Campylobacter fetus subsp. fetus (strain 82-40)).